Consider the following 281-residue polypeptide: Bifunctional N-acyl-homoserine lactone acylase/prephenate dehydratase (281 aa).

The Prephenate dehydratase domain occupies 6-181; sequence IIAFQGRPGA…NTTRFYIASR (176 aa). In terms of domain architecture, ACT spans 196–273; it reads TLLFRVNNQP…EQQEILGVYP (78 aa). Residues Ala207, Leu208, Asn221, and Met222 each coordinate L-phenylalanine.

As to quaternary structure, homodimer.

It catalyses the reaction an N-acyl-L-homoserine lactone + H2O = L-homoserine lactone + a carboxylate. The catalysed reaction is prephenate + H(+) = 3-phenylpyruvate + CO2 + H2O. It functions in the pathway amino-acid biosynthesis; L-phenylalanine biosynthesis; phenylpyruvate from prephenate: step 1/1. Multifunctional enzyme that acts on N-acyl-homoserine lactones (AHLs), beta-lactam antibiotics and shows prephenate dehydratase activity. Acts as an acylase on AHL and hydrolyzes the amide bond of the acyl side-chain of AHL molecules, releasing homoserine lactone (HSL) and the fatty acid. Can use different 3-oxo-acyl homoserine lactones, such as 3-oxo-decanoyl homoserine lactone, which is the preferred substrate, 3-oxo-octanoyl homoserine lactone, 3-oxo-hexanoyl homoserine lactone and 3-oxo-dodecanoyl homoserine lactone. It can also degrade various beta-lactam antibiotics, including penicillin G, amoxicillin and ampicillin, but not cefotaxime. In addition, it can complement a phenylalanine auxotrophic E.coli mutant, which carries a kanamycin gene inserted into pheA, suggesting that GqqA can also function as a prephenate dehydratase. Involved in bacterial quorum quenching (QQ) and cellulose biofilm formation. This is Bifunctional N-acyl-homoserine lactone acylase/prephenate dehydratase from Komagataeibacter europaeus (Gluconacetobacter europaeus).